A 284-amino-acid chain; its full sequence is 2-dehydro-3-deoxyphosphooctonate aldolase (284 aa).

This sequence belongs to the KdsA family.

It is found in the cytoplasm. The enzyme catalyses D-arabinose 5-phosphate + phosphoenolpyruvate + H2O = 3-deoxy-alpha-D-manno-2-octulosonate-8-phosphate + phosphate. It participates in carbohydrate biosynthesis; 3-deoxy-D-manno-octulosonate biosynthesis; 3-deoxy-D-manno-octulosonate from D-ribulose 5-phosphate: step 2/3. The protein operates within bacterial outer membrane biogenesis; lipopolysaccharide biosynthesis. This is 2-dehydro-3-deoxyphosphooctonate aldolase from Serratia proteamaculans (strain 568).